A 344-amino-acid polypeptide reads, in one-letter code: Succinylglutamate desuccinylase (344 aa).

Positions 63, 66, and 160 each coordinate Zn(2+). Glu224 is an active-site residue.

Belongs to the AspA/AstE family. Succinylglutamate desuccinylase subfamily. Requires Zn(2+) as cofactor.

The enzyme catalyses N-succinyl-L-glutamate + H2O = L-glutamate + succinate. Its pathway is amino-acid degradation; L-arginine degradation via AST pathway; L-glutamate and succinate from L-arginine: step 5/5. Functionally, transforms N(2)-succinylglutamate into succinate and glutamate. The protein is Succinylglutamate desuccinylase of Shewanella sp. (strain MR-7).